The sequence spans 131 residues: Large ribosomal subunit protein bL12 (131 aa).

This sequence belongs to the bacterial ribosomal protein bL12 family. As to quaternary structure, homodimer. Part of the ribosomal stalk of the 50S ribosomal subunit. Forms a multimeric L10(L12)X complex, where L10 forms an elongated spine to which 2 to 4 L12 dimers bind in a sequential fashion. Binds GTP-bound translation factors.

In terms of biological role, forms part of the ribosomal stalk which helps the ribosome interact with GTP-bound translation factors. Is thus essential for accurate translation. This is Large ribosomal subunit protein bL12 from Prochlorococcus marinus (strain MIT 9515).